A 105-amino-acid chain; its full sequence is Insulin (105 aa).

A signal peptide spans 1–24 (MALWTRLVPLLALLALWAPAPAHA). 3 disulfides stabilise this stretch: C31-C91, C43-C104, and C90-C95. A propeptide spans 57–82 (EVEGPQVGALELAGGPGAGGLEGPPQ) (c peptide).

This sequence belongs to the insulin family. In terms of assembly, heterodimer of a B chain and an A chain linked by two disulfide bonds.

Its subcellular location is the secreted. In terms of biological role, insulin decreases blood glucose concentration. It increases cell permeability to monosaccharides, amino acids and fatty acids. It accelerates glycolysis, the pentose phosphate cycle, and glycogen synthesis in liver. This is Insulin (INS) from Ovis aries (Sheep).